Consider the following 48-residue polypeptide: Large ribosomal subunit protein bL34 (48 aa).

It belongs to the bacterial ribosomal protein bL34 family.

In Mycoplasma genitalium (strain ATCC 33530 / DSM 19775 / NCTC 10195 / G37) (Mycoplasmoides genitalium), this protein is Large ribosomal subunit protein bL34 (rpmH).